Here is a 146-residue protein sequence, read N- to C-terminus: Hydroxyproline-rich systemin (146 aa).

A signal peptide spans 1–24 (MISFFRAFFLIIIISFLIFVGAQA). Residues 25 to 48 (RTLLGNYHDDEMLIELKLESGNYG) constitute a propeptide that is removed on maturation. The disordered stretch occupies residues 47–128 (YGRTPYKTPP…PPPPKPQDEQ (82 aa)). Pro-51, Pro-55, Pro-56, Pro-57, Pro-58, and Pro-63 each carry 4-hydroxyproline. Residues Pro-51, Pro-55, Pro-56, Pro-57, Pro-58, and Pro-63 are each glycosylated (O-linked (Ara...) hydroxyproline). Positions 67-70 (EIVN) are excised as a propeptide. A 4-hydroxyproline mark is found at Pro-79, Pro-80, and Pro-82. Residues Pro-79, Pro-80, and Pro-82 are each glycosylated (O-linked (Ara...) hydroxyproline). A propeptide spanning residues 86-110 (PIIGQLTTITTTPHHDDTVAAPPVG) is cleaved from the precursor. Residues Pro-119, Pro-120, Pro-121, and Pro-122 each carry the 4-hydroxyproline modification. Residues Pro-119, Pro-120, Pro-121, and Pro-122 are each glycosylated (O-linked (Ara...) hydroxyproline). A propeptide spanning residues 131–146 (IIITSSSSTLPLQASY) is cleaved from the precursor.

O-glycosylated; contains pentose side chains. As to expression, leaves.

It localises to the secreted. Activates a lipid-based signal transduction pathway in which linolenic acid is converted to jasmonic acid, a potent activator of defense gene transcription. Induces synthesis of proteinase inhibitors I and II in leaves when supplied through cut stems. This is Hydroxyproline-rich systemin from Solanum lycopersicum (Tomato).